The chain runs to 131 residues: Profilin (131 aa).

The protein belongs to the profilin family. As to quaternary structure, occurs in many kinds of cells as a complex with monomeric actin in a 1:1 ratio.

Its subcellular location is the cytoplasm. It localises to the cytoskeleton. Its function is as follows. Binds to actin and affects the structure of the cytoskeleton. At high concentrations, profilin prevents the polymerization of actin, whereas it enhances it at low concentrations. By binding to PIP2, it inhibits the formation of IP3 and DG. The sequence is that of Profilin from Capsicum annuum (Capsicum pepper).